We begin with the raw amino-acid sequence, 136 residues long: Cytokine-like protein 1 (136 aa).

A signal peptide spans 1–22 (MRTPGPLPVLLLLLAGAPAARP).

Specifically expressed in CD34+ hematopoietic cells.

The protein resides in the secreted. This chain is Cytokine-like protein 1 (CYTL1), found in Homo sapiens (Human).